Consider the following 209-residue polypeptide: Zinc finger SWIM domain-containing protein sws1 (209 aa).

Residues 1–30 (MQQGHFTSNSYHSKTLNSSSLPVSSKFSHT) are compositionally biased toward polar residues. A disordered region spans residues 1-33 (MQQGHFTSNSYHSKTLNSSSLPVSSKFSHTNDP). The SWIM-type zinc finger occupies 143-203 (TTIDLKYWYC…HILAASILRA (61 aa)).

Interacts with rdl1, rlp1 and srs2.

The protein localises to the cytoplasm. Its subcellular location is the nucleus. It localises to the nucleoplasm. Functionally, involved in early stages of the homologous recombination repair (HRR) pathway of double-stranded DNA breaks arising during DNA replication or induced by DNA-damaging agents. In Schizosaccharomyces pombe (strain 972 / ATCC 24843) (Fission yeast), this protein is Zinc finger SWIM domain-containing protein sws1 (sws1).